A 1123-amino-acid polypeptide reads, in one-letter code: Translation initiation factor IF-2 (1123 aa).

2 disordered regions span residues Leu52–Ile452 and Leu480–Gln512. Composition is skewed to low complexity over residues Lys54–Ala73, Lys94–Pro113, and Ala121–Ala133. Positions Pro170 to Ala187 are enriched in pro residues. The segment covering Ala193–Pro206 has biased composition (low complexity). Pro residues-rich tracts occupy residues Ala207–Lys217 and Ser258–Ser268. Residues Arg285–Gly304 are compositionally biased toward low complexity. Over residues Gly320 to Asn339 the composition is skewed to gly residues. The span at Ala388–Ala403 shows a compositional bias: pro residues. The segment covering Phe412–Arg422 has biased composition (gly residues). Over residues Gly425 to Arg439 the composition is skewed to basic and acidic residues. Residues Pro486 to Ala499 are compositionally biased toward low complexity. A compositionally biased stretch (basic residues) spans Met500–Gln512. The tr-type G domain maps to Arg615–Leu787. The interval Gly624–Thr631 is G1. Residue Gly624 to Thr631 coordinates GTP. A G2 region spans residues Gly649–His653. Positions Asp674–Gly677 are G3. Residues Asp674–His678 and Asn728–Asp731 each bind GTP. A G4 region spans residues Asn728–Asp731. A G5 region spans residues Ser764–Ile766.

This sequence belongs to the TRAFAC class translation factor GTPase superfamily. Classic translation factor GTPase family. IF-2 subfamily.

It is found in the cytoplasm. Functionally, one of the essential components for the initiation of protein synthesis. Protects formylmethionyl-tRNA from spontaneous hydrolysis and promotes its binding to the 30S ribosomal subunits. Also involved in the hydrolysis of GTP during the formation of the 70S ribosomal complex. The chain is Translation initiation factor IF-2 from Synechococcus sp. (strain WH7803).